Consider the following 523-residue polypeptide: 2-isopropylmalate synthase (523 aa).

One can recognise a Pyruvate carboxyltransferase domain in the interval 5-267 (VIIFDTTLRD…HTRINHQEIW (263 aa)). Mn(2+) is bound by residues Asp14, His202, His204, and Asn238. Positions 392-523 (RLDYFSVQSG…QNKENNKETV (132 aa)) are regulatory domain.

It belongs to the alpha-IPM synthase/homocitrate synthase family. LeuA type 1 subfamily. As to quaternary structure, homodimer. Mn(2+) serves as cofactor.

It localises to the cytoplasm. The catalysed reaction is 3-methyl-2-oxobutanoate + acetyl-CoA + H2O = (2S)-2-isopropylmalate + CoA + H(+). It participates in amino-acid biosynthesis; L-leucine biosynthesis; L-leucine from 3-methyl-2-oxobutanoate: step 1/4. Functionally, catalyzes the condensation of the acetyl group of acetyl-CoA with 3-methyl-2-oxobutanoate (2-ketoisovalerate) to form 3-carboxy-3-hydroxy-4-methylpentanoate (2-isopropylmalate). The protein is 2-isopropylmalate synthase of Citrobacter koseri (strain ATCC BAA-895 / CDC 4225-83 / SGSC4696).